Here is a 229-residue protein sequence, read N- to C-terminus: MLHLENIRVRQGSFTLSAHLTIAKGARVALMGASGSGKSTLLSTLSGFLWPDAGRITMAGADVAKTPVADRPISILFQDGNLFPHLSVFDNVALGIRPNLKLGSEDERRVTRALTQVGLEGMEQRKPSALSGGQQSRVALARMLLRDKPVALLDEPFSALDPGLRREMLSLVRKLCDETGQTLIMATHDLRDAERLCDRVLLLDDGKVVLDAPLAEAVANNAEPLRPWM.

Positions 2–229 (LHLENIRVRQ…NNAEPLRPWM (228 aa)) constitute an ABC transporter domain. ATP is bound at residue 32 to 39 (GASGSGKS).

Belongs to the ABC transporter superfamily. Thiamine importer (TC 3.A.1.19.1) family. In terms of assembly, the complex is composed of two ATP-binding proteins (ThiQ), two transmembrane proteins (ThiP) and a solute-binding protein (ThiB).

The protein localises to the cell inner membrane. The enzyme catalyses thiamine(out) + ATP + H2O = thiamine(in) + ADP + phosphate + H(+). Its function is as follows. Part of the ABC transporter complex ThiBPQ involved in thiamine import. Responsible for energy coupling to the transport system. This Jannaschia sp. (strain CCS1) protein is Thiamine import ATP-binding protein ThiQ.